The sequence spans 152 residues: Protein-export protein SecB (152 aa).

The protein belongs to the SecB family. In terms of assembly, homotetramer, a dimer of dimers. One homotetramer interacts with 1 SecA dimer.

It is found in the cytoplasm. Its function is as follows. One of the proteins required for the normal export of preproteins out of the cell cytoplasm. It is a molecular chaperone that binds to a subset of precursor proteins, maintaining them in a translocation-competent state. It also specifically binds to its receptor SecA. In Dechloromonas aromatica (strain RCB), this protein is Protein-export protein SecB.